Reading from the N-terminus, the 268-residue chain is Expansin-B3 (268 aa).

Residues 1 to 25 (MAFSISKKAAVAALFSFLVVTCVAG) form the signal peptide. The N-linked (GlcNAc...) asparagine glycan is linked to N30. Residues 62 to 168 (GGACGFKNTN…KRVPCNFPGL (107 aa)) enclose the Expansin-like EG45 domain. Disulfide bonds link C65/C93, C96/C163, and C101/C107. The region spanning 181–262 (VYFAVLVEYE…NWAPMAVYRS (82 aa)) is the Expansin-like CBD domain. N238 carries N-linked (GlcNAc...) asparagine glycosylation.

Belongs to the expansin family. Expansin B subfamily. As to expression, expressed in roots, coleoptiles and internodes.

It localises to the secreted. It is found in the cell wall. Its subcellular location is the membrane. Functionally, may cause loosening and extension of plant cell walls by disrupting non-covalent bonding between cellulose microfibrils and matrix glucans. No enzymatic activity has been found. May be required for rapid internodal elongation in deepwater rice during submergence. This Oryza sativa subsp. japonica (Rice) protein is Expansin-B3 (EXPB3).